Consider the following 181-residue polypeptide: Cytolethal distending toxin subunit C (181 aa).

Residues 1-15 (MKKLAIVFTMLLIAG) form the signal peptide. Cys-16 carries the N-palmitoyl cysteine lipid modification. The S-diacylglycerol cysteine moiety is linked to residue Cys-16. Residues 79–181 (QSGWIMIRTP…NPLNTESPII (103 aa)) form the Ricin B-type lectin domain.

In terms of assembly, heterotrimer of 3 subunits, CdtA, CdtB and CdtC.

The protein resides in the cell outer membrane. Functionally, part of the tripartite complex that is required for the CDT activity. CdtC, along with CdtA, probably forms a heterodimeric subunit required for the delivery of CdtB. This Escherichia coli protein is Cytolethal distending toxin subunit C (cdtC).